A 431-amino-acid chain; its full sequence is Protein SHQ1 homolog (431 aa).

The protein belongs to the SHQ1 family.

Functionally, required for the quantitative accumulation of H/ACA ribonucleoproteins (RNPs). The protein is Protein SHQ1 homolog of Caenorhabditis elegans.